The chain runs to 626 residues: Procollagen galactosyltransferase 2 (626 aa).

The first 27 residues, 1 to 27 (MAARPAATLAWSLLLLSSALLREGCRA), serve as a signal peptide directing secretion. Residues asparagine 97, asparagine 185, asparagine 382, and asparagine 580 are each glycosylated (N-linked (GlcNAc...) asparagine). A disordered region spans residues 604–626 (NAKNTEALPPPTSLDTVPSRDEL). The Prevents secretion from ER signature appears at 623-626 (RDEL).

The protein belongs to the glycosyltransferase 25 family. Expressed in brain and skeletal muscle.

It is found in the endoplasmic reticulum lumen. The catalysed reaction is (5R)-5-hydroxy-L-lysyl-[collagen] + UDP-alpha-D-galactose = (5R)-5-O-(beta-D-galactosyl)-5-hydroxy-L-lysyl-[collagen] + UDP + H(+). Beta-galactosyltransferase that transfers beta-galactose to hydroxylysine residues of collagen. This Homo sapiens (Human) protein is Procollagen galactosyltransferase 2 (COLGALT2).